The sequence spans 132 residues: ER membrane protein complex subunit 5 (132 aa).

Topologically, residues 1 to 3 (MAS) are cytoplasmic. A helical transmembrane segment spans residues 4 to 22 (SIWKGLVGIGLFALAHAAF). Topologically, residues 23–43 (SAAQHRSYMRLTEKEDETLPI) are lumenal. The helical transmembrane segment at 44 to 63 (DIVLQTLLAFIVACYGIVHI) threads the bilayer. Residues 64–132 (AGEFKDMDAT…KLSKLESMHR (69 aa)) are Cytoplasmic-facing.

The protein belongs to the membrane magnesium transporter (TC 1.A.67) family. As to quaternary structure, component of the ER membrane protein complex (EMC).

It localises to the endoplasmic reticulum membrane. It is found in the golgi apparatus membrane. Its subcellular location is the early endosome membrane. Part of the endoplasmic reticulum membrane protein complex (EMC) that enables the energy-independent insertion into endoplasmic reticulum membranes of newly synthesized membrane proteins. Preferentially accommodates proteins with transmembrane domains that are weakly hydrophobic or contain destabilizing features such as charged and aromatic residues. Involved in the cotranslational insertion of multi-pass membrane proteins in which stop-transfer membrane-anchor sequences become ER membrane spanning helices. It is also required for the post-translational insertion of tail-anchored/TA proteins in endoplasmic reticulum membranes. By mediating the proper cotranslational insertion of N-terminal transmembrane domains in an N-exo topology, with translocated N-terminus in the lumen of the ER, controls the topology of multi-pass membrane proteins like the G protein-coupled receptors. By regulating the insertion of various proteins in membranes, it is indirectly involved in many cellular processes. May be involved in Mg(2+) transport. In Xenopus tropicalis (Western clawed frog), this protein is ER membrane protein complex subunit 5.